The chain runs to 299 residues: MPT51/MPB51 antigen (299 aa).

A signal peptide spans 1 to 26 (MKGRSALLRALWIAALSFGLGGVAVA).

This sequence belongs to the mycobacterial A85 antigen family. In terms of assembly, homodimer.

The protein localises to the secreted. Functionally, may have a role in host tissue attachment, whereby ligands may include the serum protein fibronectin and small sugars. The protein is MPT51/MPB51 antigen (mpt51) of Mycobacterium bovis (strain ATCC BAA-935 / AF2122/97).